The following is a 90-amino-acid chain: Barrier-to-autointegration factor B (90 aa).

This sequence belongs to the BAF family. In terms of assembly, homodimer. Interacts with nemp1a and nemp1b.

The protein resides in the nucleus. The protein localises to the chromosome. Its subcellular location is the nucleus envelope. It localises to the cytoplasm. Functionally, non-specific DNA-binding protein that plays key roles in mitotic nuclear reassembly, chromatin organization, DNA damage response, gene expression and intrinsic immunity against foreign DNA. Contains two non-specific double-stranded DNA (dsDNA)-binding sites which promote DNA cross-bridging. Plays a key role in nuclear membrane reformation at the end of mitosis by driving formation of a single nucleus in a spindle-independent manner. Transiently cross-bridges anaphase chromosomes via its ability to bridge distant DNA sites, leading to the formation of a dense chromatin network at the chromosome ensemble surface that limits membranes to the surface. Also acts as a negative regulator of innate immune activation by restricting CGAS activity toward self-DNA upon acute loss of nuclear membrane integrity. Outcompetes CGAS for DNA-binding, thereby preventing CGAS activation and subsequent damaging autoinflammatory responses. Also involved in DNA damage response; acts by inhibiting the ADP-ribosyltransferase activity of PARP1. Involved in the recognition of exogenous dsDNA in the cytosol: associates with exogenous dsDNA immediately after its appearance in the cytosol at endosome breakdown and is required to avoid autophagy. The chain is Barrier-to-autointegration factor B (banf1-b) from Xenopus laevis (African clawed frog).